Consider the following 157-residue polypeptide: 2-C-methyl-D-erythritol 2,4-cyclodiphosphate synthase (157 aa).

Positions 8 and 10 each coordinate a divalent metal cation. 4-CDP-2-C-methyl-D-erythritol 2-phosphate-binding positions include 8 to 10 and 34 to 35; these read DVH and HS. A divalent metal cation is bound at residue His-42. 4-CDP-2-C-methyl-D-erythritol 2-phosphate contacts are provided by residues 56 to 58, 61 to 65, 100 to 106, 132 to 135, Phe-139, and Arg-142; these read DIG, FPDTD, AQAPKMA, and TTTE.

The protein belongs to the IspF family. In terms of assembly, homotrimer. Requires a divalent metal cation as cofactor.

It carries out the reaction 4-CDP-2-C-methyl-D-erythritol 2-phosphate = 2-C-methyl-D-erythritol 2,4-cyclic diphosphate + CMP. The protein operates within isoprenoid biosynthesis; isopentenyl diphosphate biosynthesis via DXP pathway; isopentenyl diphosphate from 1-deoxy-D-xylulose 5-phosphate: step 4/6. Involved in the biosynthesis of isopentenyl diphosphate (IPP) and dimethylallyl diphosphate (DMAPP), two major building blocks of isoprenoid compounds. Catalyzes the conversion of 4-diphosphocytidyl-2-C-methyl-D-erythritol 2-phosphate (CDP-ME2P) to 2-C-methyl-D-erythritol 2,4-cyclodiphosphate (ME-CPP) with a corresponding release of cytidine 5-monophosphate (CMP). The protein is 2-C-methyl-D-erythritol 2,4-cyclodiphosphate synthase of Pseudomonas aeruginosa (strain ATCC 15692 / DSM 22644 / CIP 104116 / JCM 14847 / LMG 12228 / 1C / PRS 101 / PAO1).